We begin with the raw amino-acid sequence, 311 residues long: Replication initiation protein (311 aa).

The protein belongs to the plasmid replication initiation factor family.

This protein is probably a specific topoisomerase involved in initiating replication. This protein is specifically required and may be rate-limiting for replication of the plasmid in vivo. The chain is Replication initiation protein (repD) from Staphylococcus aureus.